The primary structure comprises 439 residues: Sequestosome-1 (439 aa).

Position 2 is an N-acetylalanine (A2). An interaction with LCK region spans residues 2–48 (ASLTVKAYLLGKEEAAREIRRFSFCFSPEPEAEAAAGPGPCERLLSR). A PB1 domain is found at 3-100 (SLTVKAYLLG…DIFRIYIKEK (98 aa)). The residue at position 24 (S24) is a Phosphoserine. Residues 41-105 (PCERLLSRVA…YIKEKKECRR (65 aa)) form an interaction with PRKCZ and dimerization region. Positions 48–78 (RVAVLFPALRPGGFQAHYRDEDGDLVAFSSD) are interaction with PAWR. Residues 119-221 (VHPNVICDGC…DGRPCPTAES (103 aa)) form an interaction with GABRR3 region. The ZZ-type zinc finger occupies 120–170 (HPNVICDGCNGPVVGTRYKCSVCPDYDLCSVCEGKGLHREHSKLIFPNPFG). Residues C125, C128, C139, and C142 each coordinate Zn(2+). Y145 carries the phosphotyrosine modification. Residues C148, C151, H157, and H160 each coordinate Zn(2+). The LIM protein-binding stretch occupies residues 167–217 (NPFGHLSDSFSHSRWLRKLKHGHFGWPGWEMGPPGNWSPRPPRAGDGRPCP). Phosphoserine occurs at positions 173, 175, and 204. Residues 201–231 (GNWSPRPPRAGDGRPCPTAESASAPSEDPNV) are disordered. Residues 225 to 230 (PSEDPN) carry the TRAF6-binding motif. Residues S246 and S263 each carry the phosphoserine modification. Residues 259-389 (GGKRSRLTPT…ALYPHLPPEA (131 aa)) form a disordered region. Polar residues predominate over residues 265 to 292 (LTPTSAESSSTGTEDKSGTQPSSCSSEV). T266 is subject to Phosphothreonine. The interaction with NTRK1 stretch occupies residues 266-439 (TPTSAESSST…IQYSKHPPPL (174 aa)). A phosphoserine mark is found at S269 and S281. Residue C288 is the site of S-palmitoyl cysteine attachment. Phosphoserine is present on residues S305, S327, and S331. The tract at residues 320–341 (QPEELMESDNCSGGDDDWTHLS) is MAP1LC3B-binding. The short motif at 335–340 (DDWTHL) is the LIR element. Residues 336-346 (DWTHLSSKEVD) are compositionally biased toward basic and acidic residues. The interaction with KEAP1 stretch occupies residues 346–351 (DPSTGE). Phosphoserine occurs at positions 348, 354, 360, 364, and 365. The segment covering 350-372 (GELQSLQMPESEGPSSLDPSQEG) has biased composition (polar residues). Residues 388–433 (EADPRLIESLSQMLSMGFSDEGGWLTRLLQTKNYDIGAALDTIQYS) form the UBA domain. S402 carries the phosphoserine; by ULK1 and TBK1 modification. At S406 the chain carries Phosphoserine. K419 and K434 each carry N6-acetyllysine; alternate. K419 is covalently cross-linked (Glycyl lysine isopeptide (Lys-Gly) (interchain with G-Cter in ubiquitin); alternate). K434 is covalently cross-linked (Glycyl lysine isopeptide (Lys-Gly) (interchain with G-Cter in SUMO2); alternate).

Homooligomer or heterooligomer; may form homotypic arrays. Dimerization interferes with ubiquitin binding. Component of a ternary complex with PAWR and PRKCZ. Forms a complex with JUB/Ajuba, PRKCZ and TRAF6. Identified in a complex with TRAF6 and CYLD. Identified in a heterotrimeric complex with ubiquitin and ZFAND5, where ZFAND5 and SQSTM1 both interact with the same ubiquitin molecule. Interacts (via LIR motif) with MAP1LC3A and MAP1LC3B, as well as with other ATG8 family members, including GABARAP, GABARAPL1 and GABARAPL2; these interactions are necessary for the recruitment MAP1 LC3 family members to inclusion bodies containing polyubiquitinated protein aggregates and for their degradation by autophagy. Interacts directly with PRKCI and PRKCZ. Interacts with EBI3, LCK, RASA1, NR2F2, NTRK1, NTRK2, NTRK3, NBR1, MAP2K5 and MAPKAPK5. Upon TNF-alpha stimulation, interacts with RIPK1 probably bridging IKBKB to the TNF-R1 complex composed of TNF-R1/TNFRSF1A, TRADD and RIPK1. Interacts with the proteasome subunits PSMD4 and PSMC2. Interacts with TRAF6. Interacts with 'Lys-63'-linked polyubiquitinated MAPT/TAU. Interacts with FHOD3. Interacts with CYLD. Interacts with SESN1. Interacts with SESN2. Interacts with ULK1. Interacts with UBD. Interacts with WDR81; the interaction is direct and regulates the interaction of SQSTM1 with ubiquitinated proteins. Interacts with WDFY3; this interaction is required to recruit WDFY3 to cytoplasmic bodies and to PML bodies. Interacts with LRRC25. Interacts with STING1; leading to relocalization of STING1 to autophagosomes. Interacts (when phosphorylated at Ser-348) with KEAP1; the interaction is direct and inactivates the BCR(KEAP1) complex by sequestering KEAP1 in inclusion bodies, promoting its degradation. Interacts with MOAP1; promoting dissociation of SQSTM1 inclusion bodies that sequester KEAP1. Interacts with GBP1. Interacts with TAX1BP1. Interacts with (ubiquitinated) PEX5; specifically binds PEX5 ubiquitinated at 'Lys-209' in response to reactive oxygen species (ROS). Interacts (via PB1 domain) with TNS2; the interaction leads to sequestration of TNS2 in cytoplasmic aggregates with SQSTM1 and promotes TNS2 ubiquitination and proteasomal degradation. Interacts with IRS1; the interaction is disrupted by the presence of tensin TNS2. Interacts with TRIM5. Interacts with TRIM11 (when ubiquitinated); promoting AIM2 recruitment to autophagosomes and autophagy-dependent degradation of AIM2. Interacts with TRIM13. Interacts with TRIM16. Interacts with TRIM23. Interacts with TRIM50. Interacts with TRIM55. Interacts with ECSIT; this interaction inhibits TLR4 signaling via functional regulation of the TRAF6-ECSIT complex. Interacts with GABRR1, GABRR2 and GABRR3. Interacts with WDR83. Interacts with GRB2. Interacts with USP12; the interaction is independent of USP12 deubiquitinase activity and may be involved in regulation of autophagic flux. Interacts with ASB6. Post-translationally, phosphorylated. Phosphorylation at Ser-406 by ULK1 destabilizes the UBA dimer interface and increases binding affinity to ubiquitinated proteins. Phosphorylation at Ser-406 also primes for subsequent phosphorylation at Ser-402. Phosphorylation at Ser-402 by CK2 or ULK1 promotes binding to ubiquitinated proteins by increasing the affinity between the UBA domain and polyubiquitin chains. Phosphorylation at Ser-402 by ULK1 is stimulated by SESN2. Phosphorylated at Ser-402 by TBK1, leading to promote relocalization of 'Lys-63'-linked ubiquitinated STING1 to autophagosomes. Phosphorylation at Ser-348 by ULK1 promotes interaction with KEAP1 and inactivation of the BCR(KEAP1) complex, promoting NFE2L2/NRF2 nuclear accumulation and expression of phase II detoxifying enzymes. Phosphorylated in vitro by TTN. In terms of processing, ubiquitinated by UBE2J1 and RNF26 at Lys-434: ubiquitinated SQSTM1 attracts specific vesicle-associated adapters, forming a molecular bridge that restrains cognate vesicles in the perinuclear region and organizes the endosomal pathway for efficient cargo transport. Ubiquitination by UBE2D2 and UBE2D3 increases its ability to bind polyubiquitin chains by destabilizing the UBA dimer interface. Deubiquitination by USP15 releases target vesicles for fast transport into the cell periphery. Ubiquitinated by the BCR(KEAP1) complex at Lys-419, increasing SQSTM1 sequestering activity and promoting its degradation. Ubiquitinated via 'Lys-29' and 'Lys-33'-linked polyubiquitination leading to xenophagic targeting of bacteria and inhibition of their replication. Acetylated at Lys-419 and Lys-434 by KAT5/TIP60, promotes activity by destabilizing the UBA dimer interface and increases binding affinity to ubiquitinated proteins. Deacetylated by HDAC6. Post-translationally, palmitoylation at Cys-288 by ZDHHC19 is required for efficient autophagic degradation of SQSTM1-cargo complexes by promoting affinity for ATG8 proteins and recruitment of p62 bodies to autophagosomes. Dealmitoylated at Cys-288 by LYPLA1. In terms of tissue distribution, ubiquitously expressed. In brain, mainly expressed by neurons, especially pyramidal neurons in the cerebral cortex and hippocampus. Also expressed by Purkinje cells and neurons in the dentate nucleus of the cerebellum and neurons of the basal ganglia (at protein level).

Its subcellular location is the cytoplasmic vesicle. It is found in the autophagosome. The protein resides in the preautophagosomal structure. It localises to the cytoplasm. The protein localises to the cytosol. Its subcellular location is the nucleus. It is found in the PML body. The protein resides in the late endosome. It localises to the lysosome. The protein localises to the endoplasmic reticulum. Its subcellular location is the myofibril. It is found in the sarcomere. Molecular adapter required for selective macroautophagy (aggrephagy) by acting as a bridge between polyubiquitinated proteins and autophagosomes. Promotes the recruitment of ubiquitinated cargo proteins to autophagosomes via multiple domains that bridge proteins and organelles in different steps. SQSTM1 first mediates the assembly and removal of ubiquitinated proteins by undergoing liquid-liquid phase separation upon binding to ubiquitinated proteins via its UBA domain, leading to the formation of insoluble cytoplasmic inclusions, known as p62 bodies. SQSTM1 then interacts with ATG8 family proteins on autophagosomes via its LIR motif, leading to p62 body recruitment to autophagosomes, followed by autophagic clearance of ubiquitinated proteins. SQSTM1 is itself degraded along with its ubiquitinated cargos. Also required to recruit ubiquitinated proteins to PML bodies in the nucleus. Also involved in autophagy of peroxisomes (pexophagy) in response to reactive oxygen species (ROS) by acting as a bridge between ubiquitinated PEX5 receptor and autophagosomes. Acts as an activator of the NFE2L2/NRF2 pathway via interaction with KEAP1: interaction inactivates the BCR(KEAP1) complex by sequestering the complex in inclusion bodies, promoting nuclear accumulation of NFE2L2/NRF2 and subsequent expression of cytoprotective genes. Promotes relocalization of 'Lys-63'-linked ubiquitinated STING1 to autophagosomes. Involved in endosome organization by retaining vesicles in the perinuclear cloud: following ubiquitination by RNF26, attracts specific vesicle-associated adapters, forming a molecular bridge that restrains cognate vesicles in the perinuclear region and organizes the endosomal pathway for efficient cargo transport. Sequesters tensin TNS2 into cytoplasmic puncta, promoting TNS2 ubiquitination and proteasomal degradation. May regulate the activation of NFKB1 by TNF-alpha, nerve growth factor (NGF) and interleukin-1. May play a role in titin/TTN downstream signaling in muscle cells. Adapter that mediates the interaction between TRAF6 and CYLD. In terms of biological role, more potent than isoform 2 to stimulate PRKCZ-dependent phosphorylation of KCNAB2. This Rattus norvegicus (Rat) protein is Sequestosome-1 (Sqstm1).